A 362-amino-acid chain; its full sequence is Lipoprotein p35 (362 aa).

The signal sequence occupies residues 1–30; sequence MKIKKIKLLKALALTGAFGIVATVPVIVSS. Cysteine 31 carries N-palmitoyl cysteine lipidation. Cysteine 31 is lipidated: S-diacylglycerol cysteine. Residues 33-53 form a disordered region; sequence STSENNGNGNGNGGTDGNTQQ.

Belongs to the p35 lipoprotein family. Post-translationally, the N-terminus is blocked.

Its subcellular location is the cell membrane. Its function is as follows. Major M.penetrans antigen. The chain is Lipoprotein p35 from Malacoplasma penetrans (strain HF-2) (Mycoplasma penetrans).